A 177-amino-acid chain; its full sequence is Large ribosomal subunit protein uL6 (177 aa).

A compositionally biased stretch (basic and acidic residues) spans 157-171; sequence YKGKGVRYSDENVRR. Residues 157 to 177 are disordered; sequence YKGKGVRYSDENVRRKEAKKK.

It belongs to the universal ribosomal protein uL6 family. In terms of assembly, part of the 50S ribosomal subunit.

This protein binds to the 23S rRNA, and is important in its secondary structure. It is located near the subunit interface in the base of the L7/L12 stalk, and near the tRNA binding site of the peptidyltransferase center. The protein is Large ribosomal subunit protein uL6 of Pseudoalteromonas translucida (strain TAC 125).